A 961-amino-acid chain; its full sequence is Mitogen-activated protein kinase kinase kinase 13-A (961 aa).

The segment at 88–118 is disordered; the sequence is LRDQDEPENTAPQGSSHSGDGGSYSGNEDIR. The region spanning 169–410 is the Protein kinase domain; that stretch reads ISELQWLGSG…FRQILMHLDI (242 aa). Residues 175–183 and Lys-196 contribute to the ATP site; that span reads LGSGAQGAV. Catalysis depends on Asp-280, which acts as the Proton acceptor. Leucine-zipper stretches follow at residues 434–455 and 487–508; these read VKKHFEKIKSEGTCIHRLDEEL and LSAIMLQLEVREKELIRREQAV. Residues 458 to 497 adopt a coiled-coil conformation; the sequence is RRREELRHALDIREHYERKLERANNLYMELSAIMLQLEVR. 3 disordered regions span residues 513–600, 615–637, and 799–883; these read PGTY…SKGS, ALSQQSSQHQTLASPPVTSCSPY, and RRIR…KLDD. Residues 560–578 are compositionally biased toward low complexity; sequence SAEGSAASASPISGSPKTS. Over residues 584-596 the composition is skewed to basic residues; it reads NRYRSKPRHRRVN. Acidic residues predominate over residues 810-823; that stretch reads ESSEEEEGEVDSEV. The acidic stretch occupies residues 811–824; that stretch reads SSEEEEGEVDSEVE. A compositionally biased stretch (polar residues) spans 837–851; it reads KCQSYSTFSSENFSV.

It belongs to the protein kinase superfamily. Ser/Thr protein kinase family.

Its subcellular location is the cytoplasm. The protein resides in the membrane. The catalysed reaction is L-seryl-[protein] + ATP = O-phospho-L-seryl-[protein] + ADP + H(+). It catalyses the reaction L-threonyl-[protein] + ATP = O-phospho-L-threonyl-[protein] + ADP + H(+). In terms of biological role, may have a role in the JNK signaling pathway. This chain is Mitogen-activated protein kinase kinase kinase 13-A (map3k13-a), found in Xenopus laevis (African clawed frog).